Here is a 268-residue protein sequence, read N- to C-terminus: tRNA pseudouridine synthase A (268 aa).

Asp-52 functions as the Nucleophile in the catalytic mechanism. Tyr-110 contacts substrate.

The protein belongs to the tRNA pseudouridine synthase TruA family. In terms of assembly, homodimer.

It catalyses the reaction uridine(38/39/40) in tRNA = pseudouridine(38/39/40) in tRNA. In terms of biological role, formation of pseudouridine at positions 38, 39 and 40 in the anticodon stem and loop of transfer RNAs. This chain is tRNA pseudouridine synthase A, found in Prochlorococcus marinus (strain MIT 9312).